The sequence spans 306 residues: D-alanine--D-alanine ligase (306 aa).

The region spanning 100-295 (KQIFRRAGLP…FGQLLERLME (196 aa)) is the ATP-grasp domain. Residue 127–180 (RLPYPLFVKSNTGGSSLRLGRARNRAELDDIMGQIFAAGEEVIMEPVLPGREVT) coordinates ATP. Mg(2+)-binding residues include D249, E262, and N264.

The protein belongs to the D-alanine--D-alanine ligase family. Mg(2+) serves as cofactor. The cofactor is Mn(2+).

The protein resides in the cytoplasm. The enzyme catalyses 2 D-alanine + ATP = D-alanyl-D-alanine + ADP + phosphate + H(+). It participates in cell wall biogenesis; peptidoglycan biosynthesis. Cell wall formation. This chain is D-alanine--D-alanine ligase, found in Desulfovibrio desulfuricans (strain ATCC 27774 / DSM 6949 / MB).